The chain runs to 74 residues: Protein SlyX homolog (74 aa).

The protein belongs to the SlyX family.

The sequence is that of Protein SlyX homolog from Neisseria meningitidis serogroup C / serotype 2a (strain ATCC 700532 / DSM 15464 / FAM18).